The chain runs to 196 residues: dITP/XTP pyrophosphatase (196 aa).

10–15 (TSNKGK) is a substrate binding site. Catalysis depends on D71, which acts as the Proton acceptor. D71 contributes to the Mg(2+) binding site. Substrate-binding positions include S72, 156-159 (FGYD), K179, and 184-185 (HR).

The protein belongs to the HAM1 NTPase family. In terms of assembly, homodimer. The cofactor is Mg(2+).

It carries out the reaction XTP + H2O = XMP + diphosphate + H(+). The catalysed reaction is dITP + H2O = dIMP + diphosphate + H(+). The enzyme catalyses ITP + H2O = IMP + diphosphate + H(+). Functionally, pyrophosphatase that catalyzes the hydrolysis of nucleoside triphosphates to their monophosphate derivatives, with a high preference for the non-canonical purine nucleotides XTP (xanthosine triphosphate), dITP (deoxyinosine triphosphate) and ITP. Seems to function as a house-cleaning enzyme that removes non-canonical purine nucleotides from the nucleotide pool, thus preventing their incorporation into DNA/RNA and avoiding chromosomal lesions. This is dITP/XTP pyrophosphatase from Haemophilus ducreyi (strain 35000HP / ATCC 700724).